The following is a 92-amino-acid chain: MRLLILILLSVLVLFQYNFWFGSNGFLDYRQNAEKIKENQAENEKLSQRNQRINAEIQGLTKGFEAIEERARMQHGLVKENEVFYHIVKESK.

Residues 1–3 (MRL) are Cytoplasmic-facing. The helical transmembrane segment at 4-21 (LILILLSVLVLFQYNFWF) threads the bilayer. The Periplasmic segment spans residues 22 to 92 (GSNGFLDYRQ…VFYHIVKESK (71 aa)). Residues 28-63 (DYRQNAEKIKENQAENEKLSQRNQRINAEIQGLTKG) adopt a coiled-coil conformation.

Belongs to the FtsB family. Part of a complex composed of FtsB, FtsL and FtsQ.

The protein localises to the cell inner membrane. Functionally, essential cell division protein. May link together the upstream cell division proteins, which are predominantly cytoplasmic, with the downstream cell division proteins, which are predominantly periplasmic. This Haemophilus influenzae (strain 86-028NP) protein is Cell division protein FtsB.